The sequence spans 689 residues: Sp110 nuclear body protein (689 aa).

An HSR domain is found at 1–108; it reads MFTMTRAMEE…IYRSFKRVGA (108 aa). 2 disordered regions span residues 131 to 216 and 231 to 385; these read SSLH…MPSL and QIRD…GHGI. A compositionally biased stretch (pro residues) spans 138-148; sequence ALPPPQPPQPS. Residues 159 to 168 show a composition bias toward polar residues; that stretch reads PGTSSQQSDE. Phosphoserine occurs at positions 175 and 177. Positions 190–204 are enriched in polar residues; that stretch reads GRSTSVTNDKLTSKM. Phosphoserine is present on residues Ser-244 and Ser-256. The segment covering 276 to 296 has biased composition (basic residues); sequence KGKKRKRCIWSTPKRRHKKKS. The Nuclear localization signal motif lies at 281-294; the sequence is KRCIWSTPKRRHKK. 2 stretches are compositionally biased toward basic and acidic residues: residues 314-325 and 334-350; these read RVDQVPQKKDDS and RAQK…RSEE. Ser-380 carries the post-translational modification Phosphoserine. A Nuclear localization signal motif is present at residues 428–444; it reads KKKEKDICSSSKRRFQK. The region spanning 454-535 is the SAND domain; the sequence is SDTVDFHCSK…GELLKRKNSD (82 aa). A nuclear hormone receptor interaction region spans residues 525-529; sequence LGELL. The PHD-type zinc finger occupies 534–580; it reads SDECEVCCQGGQLLCCGTCPRVFHEDCHIPPVEAKRMLWSCTFCRMK. Residues 583-674 enclose the Bromo domain; that stretch reads SGSQQCHHVS…AEFEKDLKDV (92 aa).

In terms of assembly, (Microbial infection) Isoform 3 interacts with HCV core protein. In terms of processing, phosphorylated (isoform 2). Highly expressed in peripheral blood leukocytes and spleen. Detected at intermediate levels in thymus, prostate, testis, ovary, small intestine and colon, and at low levels in heart, brain, placenta, lung, liver, skeletal muscle, kidney and pancreas.

The protein localises to the nucleus. Functionally, transcription factor. May be a nuclear hormone receptor coactivator. Enhances transcription of genes with retinoic acid response elements (RARE). In Homo sapiens (Human), this protein is Sp110 nuclear body protein (SP110).